The sequence spans 312 residues: Holliday junction branch migration complex subunit RuvB (312 aa).

Residues 1-168 (MKTNYEFRPQ…FGHIFHLNEY (168 aa)) form a large ATPase domain (RuvB-L) region. Residues Arg-8, Gly-49, Lys-52, Thr-53, Thr-54, 115 to 117 (EDF), Arg-158, Tyr-168, and Arg-206 each bind ATP. Thr-53 is a Mg(2+) binding site. The tract at residues 169–234 (EPSEISAIIL…DIKNIFKKIQ (66 aa)) is small ATPAse domain (RuvB-S). A head domain (RuvB-H) region spans residues 237–312 (EFGLDEQDIN…DFLKNNQLIK (76 aa)). Positions 290 and 295 each coordinate DNA.

It belongs to the RuvB family. As to quaternary structure, homohexamer. Forms an RuvA(8)-RuvB(12)-Holliday junction (HJ) complex. HJ DNA is sandwiched between 2 RuvA tetramers; dsDNA enters through RuvA and exits via RuvB. An RuvB hexamer assembles on each DNA strand where it exits the tetramer. Each RuvB hexamer is contacted by two RuvA subunits (via domain III) on 2 adjacent RuvB subunits; this complex drives branch migration. In the full resolvosome a probable DNA-RuvA(4)-RuvB(12)-RuvC(2) complex forms which resolves the HJ.

Its subcellular location is the cytoplasm. It catalyses the reaction ATP + H2O = ADP + phosphate + H(+). In terms of biological role, the RuvA-RuvB-RuvC complex processes Holliday junction (HJ) DNA during genetic recombination and DNA repair, while the RuvA-RuvB complex plays an important role in the rescue of blocked DNA replication forks via replication fork reversal (RFR). RuvA specifically binds to HJ cruciform DNA, conferring on it an open structure. The RuvB hexamer acts as an ATP-dependent pump, pulling dsDNA into and through the RuvAB complex. RuvB forms 2 homohexamers on either side of HJ DNA bound by 1 or 2 RuvA tetramers; 4 subunits per hexamer contact DNA at a time. Coordinated motions by a converter formed by DNA-disengaged RuvB subunits stimulates ATP hydrolysis and nucleotide exchange. Immobilization of the converter enables RuvB to convert the ATP-contained energy into a lever motion, pulling 2 nucleotides of DNA out of the RuvA tetramer per ATP hydrolyzed, thus driving DNA branch migration. The RuvB motors rotate together with the DNA substrate, which together with the progressing nucleotide cycle form the mechanistic basis for DNA recombination by continuous HJ branch migration. Branch migration allows RuvC to scan DNA until it finds its consensus sequence, where it cleaves and resolves cruciform DNA. The protein is Holliday junction branch migration complex subunit RuvB of Ureaplasma parvum serovar 3 (strain ATCC 27815 / 27 / NCTC 11736).